A 510-amino-acid polypeptide reads, in one-letter code: Hyaluronidase PH-20 (510 aa).

The signal sequence occupies residues 1–35; that stretch reads MGVLKFKHIFFRSFVKSSGVSQIVFTFLLIPCCLT. Cystine bridges form between Cys-60–Cys-351 and Cys-224–Cys-238. Asn-82 is a glycosylation site (N-linked (GlcNAc...) asparagine). The active-site Proton donor is Glu-148. Residues Asn-166, Asn-235, Asn-254, and Asn-368 are each glycosylated (N-linked (GlcNAc...) asparagine). Cystine bridges form between Cys-376-Cys-387, Cys-381-Cys-435, and Cys-437-Cys-464. Residues Asn-393, Asn-440, and Asn-484 are each glycosylated (N-linked (GlcNAc...) asparagine). Ser-491 carries GPI-anchor amidated serine lipidation. Positions 492–510 are cleaved as a propeptide — removed in mature form; the sequence is TTMFIVNILFLIISSVASL.

This sequence belongs to the glycosyl hydrolase 56 family. Testis.

Its subcellular location is the cell membrane. It catalyses the reaction Random hydrolysis of (1-&gt;4)-linkages between N-acetyl-beta-D-glucosamine and D-glucuronate residues in hyaluronate.. Involved in sperm-egg adhesion. Upon fertilization sperm must first penetrate a layer of cumulus cells that surrounds the egg before reaching the zona pellucida. The cumulus cells are embedded in a matrix containing hyaluronic acid which is formed prior to ovulation. This protein aids in penetrating the layer of cumulus cells by digesting hyaluronic acid. The chain is Hyaluronidase PH-20 (SPAM1) from Macaca fascicularis (Crab-eating macaque).